The primary structure comprises 247 residues: E3 ubiquitin ligase TRIM40 (247 aa).

An RING-type zinc finger spans residues 12–55; sequence CPICLDPLKEAVSTDCRHLFCRMCLIRHMDKASVSGVLSCPVCR. A B box-type zinc finger spans residues 64 to 105; sequence GDNYICHTHQKRVCRFCESSRHLLCEECLQSPEHRAHTELSI. 4 residues coordinate Zn(2+): Cys-69, His-72, Cys-91, and His-97. Residues 111–148 are a coiled coil; the sequence is HYKERLNRRSRKLRKDLGDLQRLKAQEEKMLQALQVDW.

It belongs to the TRIM/RBCC family. Interacts with NEDD8.

The enzyme catalyses S-ubiquitinyl-[E2 ubiquitin-conjugating enzyme]-L-cysteine + [acceptor protein]-L-lysine = [E2 ubiquitin-conjugating enzyme]-L-cysteine + N(6)-ubiquitinyl-[acceptor protein]-L-lysine.. Functionally, E3 ubiquitin-protein ligase that plays a role in the limitation of the innate immune response. Mediates inhibition of the RLR signaling pathway by ubiquitinating RIGI and IFIH1 receptors, leading to their proteasomal degradation. Also promotes the neddylation of IKBKG/NEMO, stabilizing NFKBIA, and thereby inhibiting of NF-kappa-B nuclear translocation and activation. The sequence is that of E3 ubiquitin ligase TRIM40 (Trim40) from Rattus norvegicus (Rat).